The following is a 222-amino-acid chain: MKNNVQLLMPREKMLKFGISALTDVELLALFLRTGTRGKDVLTLAKEMLENFGSLYGLLTSEYEQFSGVHGIGVAKFAQLKGIAELARRYYNVRMREESPLLSPEMTREFLQSQLTGEEREIFMVIFLDSQHRVITHSRLFSGTLNHVEVHPREIIREAIKINASALILAHNHPSGCAEPSKADKLITERIIKSCQFMDLRVLDHIVIGRGEYVSFAERGWI.

The region spanning 100 to 222 (PLLSPEMTRE…YVSFAERGWI (123 aa)) is the MPN domain. Zn(2+) contacts are provided by H171, H173, and D184. Residues 171 to 184 (HNHPSGCAEPSKAD) carry the JAMM motif motif.

It belongs to the UPF0758 family. YicR subfamily.

The chain is UPF0758 protein YicR from Escherichia coli O81 (strain ED1a).